The following is a 287-amino-acid chain: Survival motor neuron protein (287 aa).

Residues 1–28 (MGGGGGGFPEPEDSVLFRRGTGESDDSD) form a disordered region. Residues 9–40 (PEPEDSVLFRRGTGESDDSDVWDDTALIKAYD) form a P1 (binding site for GEMIN2) region. Thr21 carries the post-translational modification Phosphothreonine. Phosphoserine occurs at positions 24 and 27. Residue Lys47 forms a Glycyl lysine isopeptide (Lys-Gly) (interchain with G-Cter in SUMO2) linkage. Disordered regions lie at residues 51 to 86 (KNGDISEASEKPKGTPKRKSAKNKSQRKNTTSPSKQ) and 149 to 221 (NAQE…PPPH). Residues 64 to 77 (GTPKRKSAKNKSQR) are compositionally biased toward basic residues. Thr65 is modified (phosphothreonine). Residue Thr80 is modified to Phosphothreonine; by PKA. Residues 86 to 146 (QWKVGDNCCA…LSPTSEVANI (61 aa)) form the Tudor domain. Residues 92–204 (NCCAIWSEDG…MPRSGLGPGK (113 aa)) are required for interaction with RPP20/POP7. Residues 149-160 (NAQENENESQIS) are compositionally biased toward low complexity. Positions 167 to 179 (SSRSPLNKPNNIR) are enriched in polar residues. Residue Lys204 forms a Glycyl lysine isopeptide (Lys-Gly) (interchain with G-Cter in SUMO2) linkage. The segment covering 211–221 (GPPPPPPPPPH) has biased composition (pro residues). The tract at residues 234-261 (PPMIPPPPPICPDSLDDADALGSMLISW) is P2 (binding site for SM B). Residues 273 to 287 (GFKQSQKEGRYSHFN) form a required for interaction with SYNCRIP region.

Belongs to the SMN family. As to quaternary structure, homooligomer; may form higher order homooligomers in the dimer to octamer range. Part of the core SMN complex that contains SMN1, GEMIN2/SIP1, DDX20/GEMIN3, GEMIN4, GEMIN5, GEMIN6, GEMIN7, GEMIN8 and STRAP/UNRIP. Part of the SMN-Sm complex that contains SMN1, GEMIN2/SIP1, DDX20/GEMIN3, GEMIN4, GEMIN5, GEMIN6, GEMIN7, GEMIN8, STRAP/UNRIP and the Sm proteins SNRPB, SNRPD1, SNRPD2, SNRPD3, SNRPE, SNRPF and SNRPG. Component of an import snRNP complex composed of KPNB1, RNUT1, SMN1 and ZNF259. Interacts with DDX20, FBL, NOLA1, RNUT1, SYNCRIP and with several spliceosomal snRNP core Sm proteins, including SNRPB, SNRPD1, SNRPD2, SNRPD3, SNRPE and ILF3. Interacts with GEMIN2; the interaction is direct. Interacts with GEMIN3; the interaction is direct. Interacts with GEMIN8; the interaction is direct. Interacts with SNRPB; the interaction is direct. Interacts (via Tudor domain) with SNRPD1 (via C-terminus); the interaction is direct. Interacts with SNRPD2; the interaction is direct. Interacts (via Tudor domain) with SNRPD3 (via C-terminus); the interaction is direct. Interacts with SNRPE; the interaction is direct. Interacts with OSTF1, LSM10, LSM11 and RPP20/POP7. Interacts (via C-terminal region) with ZPR1 (via C-terminal region). Interacts (via Tudor domain) with COIL. Interacts with SETX; recruits SETX to POLR2A. Interacts with POLR2A (via the C-terminal domain (CTD)). Interacts with PRMT5. Interacts with XRN2. Interacts (via C-terminus) with FMR1 (via C-terminus); the interaction is direct and occurs in a RNA-independent manner. Interacts (via Tudor domain) with SF3B2 ('Arg-508'-methylated form). Interacts with WRAP53/TCAB1. Interacts (via Tudor domain) with ELAVL4 in an RNA-independent manner; the interaction is required for localization of ELAVL4 to RNA granules. Interacts with FRG1.

It localises to the nucleus. Its subcellular location is the gem. The protein resides in the cajal body. It is found in the cytoplasm. The protein localises to the cytoplasmic granule. It localises to the perikaryon. Its subcellular location is the cell projection. The protein resides in the neuron projection. It is found in the axon. The protein localises to the myofibril. It localises to the sarcomere. Its subcellular location is the z line. Its function is as follows. The SMN complex catalyzes the assembly of small nuclear ribonucleoproteins (snRNPs), the building blocks of the spliceosome, and thereby plays an important role in the splicing of cellular pre-mRNAs. Most spliceosomal snRNPs contain a common set of Sm proteins SNRPB, SNRPD1, SNRPD2, SNRPD3, SNRPE, SNRPF and SNRPG that assemble in a heptameric protein ring on the Sm site of the small nuclear RNA to form the core snRNP (Sm core). In the cytosol, the Sm proteins SNRPD1, SNRPD2, SNRPE, SNRPF and SNRPG are trapped in an inactive 6S pICln-Sm complex by the chaperone CLNS1A that controls the assembly of the core snRNP. To assemble core snRNPs, the SMN complex accepts the trapped 5Sm proteins from CLNS1A forming an intermediate. Binding of snRNA inside 5Sm ultimately triggers eviction of the SMN complex, thereby allowing binding of SNRPD3 and SNRPB to complete assembly of the core snRNP. Within the SMN complex, SMN1 acts as a structural backbone and together with GEMIN2 it gathers the Sm complex subunits. Ensures the correct splicing of U12 intron-containing genes that may be important for normal motor and proprioceptive neurons development. Also required for resolving RNA-DNA hybrids created by RNA polymerase II, that form R-loop in transcription terminal regions, an important step in proper transcription termination. May also play a role in the metabolism of small nucleolar ribonucleoprotein (snoRNPs). The protein is Survival motor neuron protein (SMN1) of Bos taurus (Bovine).